Reading from the N-terminus, the 274-residue chain is Large ribosomal subunit protein uL2 (274 aa).

2 disordered regions span residues 35–55 (FGKKSSGGRNNHGRITTRHRG) and 224–274 (AMNP…KLKG). The segment covering 45 to 55 (NHGRITTRHRG) has biased composition (basic residues). Residues 263-274 (KSSDKYIKKLKG) are compositionally biased toward basic and acidic residues.

This sequence belongs to the universal ribosomal protein uL2 family. As to quaternary structure, part of the 50S ribosomal subunit. Forms a bridge to the 30S subunit in the 70S ribosome.

Functionally, one of the primary rRNA binding proteins. Required for association of the 30S and 50S subunits to form the 70S ribosome, for tRNA binding and peptide bond formation. It has been suggested to have peptidyltransferase activity; this is somewhat controversial. Makes several contacts with the 16S rRNA in the 70S ribosome. This chain is Large ribosomal subunit protein uL2, found in Wolbachia pipientis subsp. Culex pipiens (strain wPip).